Consider the following 101-residue polypeptide: NAD(P)H-quinone oxidoreductase subunit 4L (101 aa).

3 helical membrane-spanning segments follow: residues Leu3 to Thr23, Val30 to Asn50, and Ile64 to Ile84.

The protein belongs to the complex I subunit 4L family. As to quaternary structure, NDH-1 can be composed of about 15 different subunits; different subcomplexes with different compositions have been identified which probably have different functions.

It localises to the cellular thylakoid membrane. The enzyme catalyses a plastoquinone + NADH + (n+1) H(+)(in) = a plastoquinol + NAD(+) + n H(+)(out). The catalysed reaction is a plastoquinone + NADPH + (n+1) H(+)(in) = a plastoquinol + NADP(+) + n H(+)(out). NDH-1 shuttles electrons from an unknown electron donor, via FMN and iron-sulfur (Fe-S) centers, to quinones in the respiratory and/or the photosynthetic chain. The immediate electron acceptor for the enzyme in this species is believed to be plastoquinone. Couples the redox reaction to proton translocation, and thus conserves the redox energy in a proton gradient. Cyanobacterial NDH-1 also plays a role in inorganic carbon-concentration. This Leptolyngbya boryana (Plectonema boryanum) protein is NAD(P)H-quinone oxidoreductase subunit 4L.